A 348-amino-acid chain; its full sequence is Protein disulfide isomerase CRELD2 (348 aa).

Positions 1–22 are cleaved as a signal peptide; sequence MHLPPAAAVGLLLLLLPPPARV. The short motif at 30–33 is the CXXC element; it reads CQRC. 4 disulfides stabilise this stretch: cysteine 30–cysteine 33, cysteine 139–cysteine 153, cysteine 147–cysteine 165, and cysteine 167–cysteine 176. Positions 135–177 constitute an EGF-like 1 domain; it reads DCQECQGGSQRPCSGNGHCDGDGSRQGDGSCQCHVGYKGPLCI. An FU 1 repeat occupies 192–239; it reads HSFCTACDESCKTCSGPTNKGCVECEVGWTRVEDACVDVDECAAETPP. Residue asparagine 250 is glycosylated (N-linked (GlcNAc...) asparagine). Residues 252 to 299 form an FU 2 repeat; that stretch reads SYTCEECDSTCVGCTGKGPANCKECISGYSKQKGECADIDECSLETKV. The CXXC signature appears at 262 to 265; sequence CVGC. 4 disulfides stabilise this stretch: cysteine 262-cysteine 265, cysteine 293-cysteine 307, cysteine 300-cysteine 316, and cysteine 318-cysteine 328. The 41-residue stretch at 289-329 folds into the EGF-like 2; calcium-binding domain; the sequence is DIDECSLETKVCKKENENCYNTPGSFVCVCPEGFEEDRRCL.

The protein belongs to the CRELD family. As to quaternary structure, interacts with CHRNA4. Component of a complex containing at least CRELD2, MANF, MATN3 and PDIA4.

It is found in the endoplasmic reticulum. The catalysed reaction is Catalyzes the rearrangement of -S-S- bonds in proteins.. In terms of biological role, protein disulfide isomerase. Might play a role in the unfolded protein response. May regulate transport of alpha4-beta2 neuronal acetylcholine receptor. This is Protein disulfide isomerase CRELD2 (CRELD2) from Cricetulus griseus (Chinese hamster).